The chain runs to 374 residues: Chaperone protein DnaJ (374 aa).

The J domain maps to Asp-5 to Gly-70. The CR-type zinc finger occupies Gly-136–Glu-214. 8 residues coordinate Zn(2+): Cys-149, Cys-152, Cys-166, Cys-169, Cys-188, Cys-191, Cys-202, and Cys-205. CXXCXGXG motif repeat units follow at residues Cys-149–Gly-156, Cys-166–Gly-173, Cys-188–Gly-195, and Cys-202–Gly-209.

It belongs to the DnaJ family. In terms of assembly, homodimer. Zn(2+) is required as a cofactor.

It localises to the cytoplasm. Its function is as follows. Participates actively in the response to hyperosmotic and heat shock by preventing the aggregation of stress-denatured proteins and by disaggregating proteins, also in an autonomous, DnaK-independent fashion. Unfolded proteins bind initially to DnaJ; upon interaction with the DnaJ-bound protein, DnaK hydrolyzes its bound ATP, resulting in the formation of a stable complex. GrpE releases ADP from DnaK; ATP binding to DnaK triggers the release of the substrate protein, thus completing the reaction cycle. Several rounds of ATP-dependent interactions between DnaJ, DnaK and GrpE are required for fully efficient folding. Also involved, together with DnaK and GrpE, in the DNA replication of plasmids through activation of initiation proteins. The sequence is that of Chaperone protein DnaJ from Wolbachia sp. subsp. Brugia malayi (strain TRS).